Reading from the N-terminus, the 736-residue chain is Poly(A) polymerase gamma (736 aa).

Lys2 bears the N6-acetyllysine mark. Phosphoserine is present on residues Ser23 and Ser29. ATP-binding positions include 99 to 101, Thr108, 112 to 114, Asp166, Lys227, Tyr236, and 245 to 246; these read FGS, DID, and GV. Mg(2+) contacts are provided by Asp112, Asp114, and Asp166. The interval 506–564 is disordered; sequence KQSLSDVNRSSGGLQSKRLSLDSSCLDSSRDTDNGTPFNSPASKSDSPSVGETERNSAE. Over residues 509–519 the composition is skewed to polar residues; that stretch reads LSDVNRSSGGL. The segment covering 521 to 532 has biased composition (low complexity); it reads SKRLSLDSSCLD. Ser525 is modified (phosphoserine). Residues 539-555 are compositionally biased toward polar residues; it reads NGTPFNSPASKSDSPSV. Phosphoserine occurs at positions 599 and 648. At Thr654 the chain carries Phosphothreonine. The span at 673–685 shows a compositional bias: basic and acidic residues; that stretch reads DPRTAEERKRKSV. Residues 673-720 form a disordered region; it reads DPRTAEERKRKSVDAIGGESMPIPTIDTSRKKRLPSKELPDSSSPVPA. A phosphoserine mark is found at Ser684 and Ser708.

It belongs to the poly(A) polymerase family. It depends on Mg(2+) as a cofactor. Mn(2+) serves as cofactor. In terms of tissue distribution, expressed predominantly in testis, and weakly in other tissues. Overexpressed in several tumors.

The protein resides in the nucleus. The catalysed reaction is RNA(n) + ATP = RNA(n)-3'-adenine ribonucleotide + diphosphate. In terms of biological role, responsible for the post-transcriptional adenylation of the 3'-terminal of mRNA precursors and several small RNAs including signal recognition particle (SRP) RNA, nuclear 7SK RNA, U2 small nuclear RNA, and ribosomal 5S RNA. In Homo sapiens (Human), this protein is Poly(A) polymerase gamma.